We begin with the raw amino-acid sequence, 791 residues long: MPLPGGLWWLLCCRRGFTLLHRDYGDGELSGDGDEDEDDETFELRSPSPAGGGRGSLDVTLTQPTRNGPITDRLQSWEETWSLIPDKGLPEDDPDVIVKGWLYREPRGGGARPWLLPRRAWFVLTRDSLDQFSSSGKGARRLGSLVLTSLCSVTGPERRPKETGLWSVTVSGRKHSIRLCSPRQAEAERWGVALREVIASKAPLETPTQLLLRDIQESGGDPEAVALIYRRNPILRHTSSALYAPLLPLPYEVSAPGPGYAPLREEAVRLFLALQALEGARRPGPLMQGVLQTCRDLPALQDELFLQLAKQTSGPAGPPGLPATQDPAALRYWQLLTCMSCTFRPGGAVRGHLLGHLERTEQALPDSELAEYARFIRKALGRTRGRELVPSLAEISALSRRQELLCTVHCPGAGACPVSIDSHTTAGEVARELVGRLGLARSRNAFALYEQRGAQERALAGGTLVADVLTSLTSEEVGLEDSPDSGWRLCLRLHGPLHPEGLSPEGHELPFLFEQAHALLLRGRPPPPDDTLRALAALRLQSLHRDFSPRGPLPLLDRLMPPPAPPREQPSRPARRPPPSAALLAGALWSPGLAKRRAERARRIGTGRSTESTAQVGGGGGGSTTAAVLGGWKRLRGMGQAEAMAAYLALAAQCPGFGAARYDVLELSTEPGGGAPQKLCLGLGAKAMSLSRPGESEPIHSVSYGHVAACQLIGPHTLALRVGDSQLLLQSPQVEEIMELVNAYLANPSPERPCSSSGPPSQDLSDTSPPSQHQVLEKPQGQSGCLRQLQD.

An N-terminal signal peptide occupies residues 1-18; it reads MPLPGGLWWLLCCRRGFT. A compositionally biased stretch (acidic residues) spans 29–41; the sequence is LSGDGDEDEDDET. A disordered region spans residues 29–71; that stretch reads LSGDGDEDEDDETFELRSPSPAGGGRGSLDVTLTQPTRNGPIT. Ser-30 is modified (phosphoserine). Over residues 59–71 the composition is skewed to polar residues; that stretch reads VTLTQPTRNGPIT. One can recognise a PH domain in the interval 95–199; sequence DVIVKGWLYR…WGVALREVIA (105 aa). The MyTH4 domain occupies 237–399; sequence HTSSALYAPL…PSLAEISALS (163 aa). The 352-residue stretch at 404–755 folds into the FERM domain; sequence LLCTVHCPGA…ANPSPERPCS (352 aa). Low complexity predominate over residues 549–559; the sequence is PRGPLPLLDRL. Disordered regions lie at residues 549–580 and 593–623; these read PRGP…PPPS and LAKR…GGGS. A compositionally biased stretch (basic residues) spans 594–605; the sequence is AKRRAERARRIG. Arg-636 carries the post-translational modification Omega-N-methylarginine. The segment at 748–791 is disordered; sequence PSPERPCSSSGPPSQDLSDTSPPSQHQVLEKPQGQSGCLRQLQD. A compositionally biased stretch (polar residues) spans 754–791; sequence CSSSGPPSQDLSDTSPPSQHQVLEKPQGQSGCLRQLQD.

This chain is Pleckstrin homology domain-containing family H member 3 (Plekhh3), found in Rattus norvegicus (Rat).